The primary structure comprises 435 residues: Cyclin-J-like protein (435 aa).

In terms of domain architecture, Cyclin N-terminal spans 14–191 (DVHCTLREKE…LLEAFSWNLC (178 aa)). The segment at 120-142 (SSNSPASAPHPPPTPPQVAETTG) is disordered.

The protein belongs to the cyclin family. Cyclin J subfamily.

The sequence is that of Cyclin-J-like protein (CCNJL) from Homo sapiens (Human).